The primary structure comprises 118 residues: MKRIAFVFSTAPHGSASGREGLDALLATSALTEALGVFFISDGVFQLLPGQKPDAVLARDYIATFKLFDLYDIDQCWICAASLRERGLENVNFVVNATPLEPVALRRELGNYDVILRF.

This sequence belongs to the DsrF/TusC family. As to quaternary structure, heterohexamer, formed by a dimer of trimers. The hexameric TusBCD complex contains 2 copies each of TusB, TusC and TusD. The TusBCD complex interacts with TusE.

The protein localises to the cytoplasm. Functionally, part of a sulfur-relay system required for 2-thiolation of 5-methylaminomethyl-2-thiouridine (mnm(5)s(2)U) at tRNA wobble positions. The protein is Protein TusC of Salmonella typhi.